A 1337-amino-acid chain; its full sequence is Receptor-type tyrosine-protein phosphatase eta (1337 aa).

The first 35 residues, 1–35 (MKPAAREARLPPRSPGLRWALPLLLLLLRLGQILC), serve as a signal peptide directing secretion. At 36–975 (AGGTPSPIPD…LPQDPGVICG (940 aa)) the chain is on the extracellular side. Polar residues-rich tracts occupy residues 67-82 (SFHK…VETN) and 89-119 (SSGA…STGP). The tract at residues 67–124 (SFHKQNGTGTPQVETNTSEDGESSGANDSLRTPEQGSNGTDGASQKTPSSTGPSPVFD) is disordered. Residues Asn72, Asn82, Asn93, Asn104, Asn142, Asn172, Asn192, Asn231, Asn258, Asn278, Asn342, Asn351, Asn376, Asn391, Asn396, Asn413, Asn431, Asn501, Asn525, Asn536, Asn582, Asn603, Asn618, Asn628, Asn637, Asn666, Asn669, Asn761, Asn772, Asn784, Asn790, Asn824, Asn910, and Asn937 are each glycosylated (N-linked (GlcNAc...) asparagine). Fibronectin type-III domains follow at residues 121 to 209 (PVFD…EPIP), 207 to 291 (PIPV…EGGL), 271 to 364 (NPYL…EFRT), 368 to 456 (QVFD…PPVP), 457 to 541 (VSDF…TVPS), 542 to 623 (AVFD…TAQY), 625 to 720 (RPSN…TDPA), 721 to 817 (SMAS…TDPP), and 816 to 902 (PPPP…SEVL). The disordered stretch occupies residues 278–327 (NKTKGDPLGTEGGLDASNTERSRAGSPTAPVHDESLVGPVDPSSGQQSRD). The helical transmembrane segment at 976 to 996 (AVFGCIFGALVIVTVGGFIFW) threads the bilayer. Topologically, residues 997–1337 (RKKRKDAKNN…TFGKTNGYIA (341 aa)) are cytoplasmic. Ser1009 carries the post-translational modification Phosphoserine. Positions 1041–1298 (FAEEYEDLKL…VFLNQCVLDI (258 aa)) constitute a Tyrosine-protein phosphatase domain. Substrate is bound by residues Asp1205, 1239-1245 (CSAGVGR), and Gln1283. Cys1239 serves as the catalytic Phosphocysteine intermediate.

This sequence belongs to the protein-tyrosine phosphatase family. Receptor class 3 subfamily. In terms of assembly, monomer. Interacts with CTNNB1 (phosphorylated) and JUP (phosphorylated). Interacts with FLT3 (phosphorylated). Interacts with GAB1 and GRB2. In terms of processing, N- and O-glycosylated. N-glycosylated. Expressed in the promyelocytic cell line HL-60, the granulocyte-macrophage colony-stimulating factor-dependent leukemic cell line F-36P, and the IL3 and erythropoietin-dependent leukemic cell line F-36E. Expressed predominantly in epithelial cells and lymphocytes. Enhanced expression at high cell density. In terms of tissue distribution, expressed in the brain.

It localises to the cell membrane. Its subcellular location is the cell projection. It is found in the ruffle membrane. The protein localises to the cell junction. The protein resides in the secreted. It localises to the extracellular space. The enzyme catalyses O-phospho-L-tyrosyl-[protein] + H2O = L-tyrosyl-[protein] + phosphate. Tyrosine phosphatase which dephosphorylates or contributes to the dephosphorylation of CTNND1, FLT3, PDGFRB, MET, KDR, LYN, SRC, MAPK1, MAPK3, EGFR, TJP1, OCLN, PIK3R1 and PIK3R2. Plays a role in cell adhesion, migration, proliferation and differentiation. Has a role in megakaryocytes and platelet formation. Involved in vascular development. Regulator of macrophage adhesion and spreading. Positively affects cell-matrix adhesion. Positive regulator of platelet activation and thrombosis. Negative regulator of cell proliferation. Negative regulator of PDGF-stimulated cell migration; through dephosphorylation of PDGFR. Positive regulator of endothelial cell survival, as well as of VEGF-induced SRC and AKT activation; through KDR dephosphorylation. Negative regulator of EGFR signaling pathway; through EGFR dephosphorylation. Enhances the barrier function of epithelial junctions during reassembly. Negatively regulates T-cell receptor (TCR) signaling. Upon T-cell TCR activation, it is up-regulated and excluded from the immunological synapses, while upon T-cell-antigen presenting cells (APC) disengagement, it is no longer excluded and can dephosphorylate PLCG1 and LAT to down-regulate prolongation of signaling. In terms of biological role, activates angiogenesis and cell migration. Downregulates the expression of the endothelial adhesion molecules ICAM1 and VCAM1. This Homo sapiens (Human) protein is Receptor-type tyrosine-protein phosphatase eta (PTPRJ).